A 338-amino-acid chain; its full sequence is MARKLSIKLAINEAIDQEMTRDPSVIMLGEDIVGGAGADGEKDAWGGVLGVTKGLYAKHGDRLLDTPLSESAYVGAAIGAAACGMRPIAELMFIDFMGVCFDQIFNQAAKFRYMFGGKAETPVVIRAMVGAGFRAAAQHSQMLTPLFTHIPGLKVVCPSTPYDTKGLLIQAIRDNDPVIFCEHKNLYGLEGEVPEGAYAIPFGEANIVRDGKDVSIVTYGLMVHRALEAAATLAKEGIEAEIVDLRTLSPLDMDTVLESVENTGRLVVVDEASPRCNIATDISAQVAQQAFGALKAGIEMVCPPHTPVPFSPTLEDLYIPSAAQIAAAARKTMKGGKH.

Tetramer of 2 alpha and 2 beta subunits.

It participates in ketone degradation; acetoin degradation. Its function is as follows. Catalyzes the 2,6-dichlorophenolindophenol-dependent cleavage of acetoin into acetate and acetaldehyde, in vitro. The beta subunit is probably not the catalytic subunit of the enzyme. This chain is Acetoin:2,6-dichlorophenolindophenol oxidoreductase subunit beta (acoB), found in Cupriavidus necator (strain ATCC 17699 / DSM 428 / KCTC 22496 / NCIMB 10442 / H16 / Stanier 337) (Ralstonia eutropha).